The following is a 487-amino-acid chain: Histamine H1 receptor (487 aa).

The Extracellular segment spans residues 1–29 (MSLPNSSCLLEDKMCEGNKTTMASPQLMP). Residues Asn5 and Asn18 are each glycosylated (N-linked (GlcNAc...) asparagine). Residues 30–50 (LVVVLSTISLVTVGLNLLVLY) traverse the membrane as a helical segment. Residues 51 to 64 (AVRSERKLHTVGNL) are Cytoplasmic-facing. The chain crosses the membrane as a helical span at residues 65–89 (YIVSLSVADLIVGAVVMPMNILYLL). Topologically, residues 90-97 (MSKWSLGR) are extracellular. Residues 98-123 (PLCLFWLSMDYVASTASIFSVFILCI) traverse the membrane as a helical segment. An intrachain disulfide couples Cys100 to Cys180. Histamine-binding residues include Asp107 and Thr112. The tract at residues 107–112 (DYVAST) is important for agonist binding. The Cytoplasmic segment spans residues 124–144 (DRYRSVQQPLRYLKYRTKTRA). A phosphothreonine mark is found at Thr140 and Thr142. The chain crosses the membrane as a helical span at residues 145-164 (SATILGAWFLSFLWVIPILG). Over 165–188 (WNHFRQQISVRREDKCETDFYDVT) the chain is Extracellular. A helical membrane pass occupies residues 189–211 (WFKVMTAIINFYLPTLLMLWFYA). Asn198 serves as a coordination point for histamine. Residues 212-416 (KIYKAVQKHC…MNRERKAAKQ (205 aa)) lie on the Cytoplasmic side of the membrane. Phosphoserine is present on Ser230. Positions 238 to 261 (KLRPENPKGDAKKPGKESPWEVLK) are enriched in basic and acidic residues. Residues 238–286 (KLRPENPKGDAKKPGKESPWEVLKRKPKDAGGGSVLKSPSQTPKEMKSP) are disordered. Thr279 is modified (phosphothreonine). Phosphoserine is present on residues Ser344 and Ser347. Positions 345-379 (EISEDQMLGDSQSFSRTDSDTTTETAPGKGKLRSG) are disordered. The segment covering 353–369 (GDSQSFSRTDSDTTTET) has biased composition (polar residues). A phosphoserine mark is found at Ser380, Ser396, and Ser398. A helical membrane pass occupies residues 417–440 (LGFIMAAFILCWIPYFIFFMVIAF). Residues 424-428 (FILCW) form an important for agonist binding region. A histamine-binding site is contributed by Tyr431. The cysteines at positions 441 and 444 are disulfide-linked. Residues 441–446 (CKNCCN) are Extracellular-facing. The helical transmembrane segment at 447–469 (EHLHMFTIWLGYINSTLNPLIYP) threads the bilayer. The Cytoplasmic portion of the chain corresponds to 470–487 (LCNENFKKTFKRILHIRS).

This sequence belongs to the G-protein coupled receptor 1 family. In terms of processing, phosphorylation at sites in the second and third cytoplasmic loops independently contribute to agonist-induced receptor down-regulation.

It is found in the cell membrane. In terms of biological role, G-protein-coupled receptor for histamine, a biogenic amine that functions as an immune modulator and a neurotransmitter. Through the H1 receptor, histamine mediates the contraction of smooth muscles and increases capillary permeability due to contraction of terminal venules. Also mediates neurotransmission in the central nervous system and thereby regulates circadian rhythms, emotional and locomotor activities as well as cognitive functions. This Pongo pygmaeus (Bornean orangutan) protein is Histamine H1 receptor.